The following is a 220-amino-acid chain: Cytidylate kinase (220 aa).

9–17 (GPAASGKST) provides a ligand contact to ATP.

It belongs to the cytidylate kinase family. Type 1 subfamily.

The protein resides in the cytoplasm. It carries out the reaction CMP + ATP = CDP + ADP. It catalyses the reaction dCMP + ATP = dCDP + ADP. The polypeptide is Cytidylate kinase (Thermotoga sp. (strain RQ2)).